The primary structure comprises 290 residues: 33 kDa chaperonin (290 aa).

2 cysteine pairs are disulfide-bonded: Cys-235/Cys-237 and Cys-268/Cys-271.

It belongs to the HSP33 family. In terms of processing, under oxidizing conditions two disulfide bonds are formed involving the reactive cysteines. Under reducing conditions zinc is bound to the reactive cysteines and the protein is inactive.

It is found in the cytoplasm. In terms of biological role, redox regulated molecular chaperone. Protects both thermally unfolding and oxidatively damaged proteins from irreversible aggregation. Plays an important role in the bacterial defense system toward oxidative stress. This chain is 33 kDa chaperonin, found in Streptococcus pneumoniae (strain P1031).